Here is a 337-residue protein sequence, read N- to C-terminus: Large ribosomal subunit protein uL3 (337 aa).

The interval 1-29 (MPKINRPRRGSLAFSPRKRAQSPIPKYKS) is disordered.

The protein belongs to the universal ribosomal protein uL3 family. Part of the 50S ribosomal subunit. Forms a cluster with proteins L14 and L24e.

Functionally, one of the primary rRNA binding proteins, it binds directly near the 3'-end of the 23S rRNA, where it nucleates assembly of the 50S subunit. This Methanoregula boonei (strain DSM 21154 / JCM 14090 / 6A8) protein is Large ribosomal subunit protein uL3.